The chain runs to 180 residues: NADH-quinone oxidoreductase subunit I (180 aa).

2 consecutive 4Fe-4S ferredoxin-type domains span residues Leu50–Ala80 and Glu90–Asp119. [4Fe-4S] cluster-binding residues include Cys60, Cys63, Cys66, Cys70, Cys99, Cys102, Cys105, and Cys109.

Belongs to the complex I 23 kDa subunit family. In terms of assembly, NDH-1 is composed of 13 different subunits. Subunits NuoA, H, J, K, L, M, N constitute the membrane sector of the complex. Requires [4Fe-4S] cluster as cofactor.

The protein resides in the cell inner membrane. The enzyme catalyses a quinone + NADH + 5 H(+)(in) = a quinol + NAD(+) + 4 H(+)(out). Its function is as follows. NDH-1 shuttles electrons from NADH, via FMN and iron-sulfur (Fe-S) centers, to quinones in the respiratory chain. The immediate electron acceptor for the enzyme in this species is believed to be ubiquinone. Couples the redox reaction to proton translocation (for every two electrons transferred, four hydrogen ions are translocated across the cytoplasmic membrane), and thus conserves the redox energy in a proton gradient. This Shigella boydii serotype 4 (strain Sb227) protein is NADH-quinone oxidoreductase subunit I.